The chain runs to 280 residues: NAD kinase (280 aa).

The active-site Proton acceptor is Asp-67. NAD(+) is bound by residues 67 to 68 (DG), Arg-72, 138 to 139 (ND), Asp-167, Ala-175, 178 to 183 (TAYSLS), and Gln-237.

This sequence belongs to the NAD kinase family. A divalent metal cation is required as a cofactor.

It is found in the cytoplasm. The enzyme catalyses NAD(+) + ATP = ADP + NADP(+) + H(+). Functionally, involved in the regulation of the intracellular balance of NAD and NADP, and is a key enzyme in the biosynthesis of NADP. Catalyzes specifically the phosphorylation on 2'-hydroxyl of the adenosine moiety of NAD to yield NADP. In Aeropyrum pernix (strain ATCC 700893 / DSM 11879 / JCM 9820 / NBRC 100138 / K1), this protein is NAD kinase.